Here is a 699-residue protein sequence, read N- to C-terminus: Polyribonucleotide nucleotidyltransferase (699 aa).

Residues D488 and D494 each coordinate Mg(2+). The region spanning 555 to 614 is the KH domain; the sequence is PRIYSIKVNPDKIKDVIGKGGSVIRSLTEETNTIIDIEDNGIIKIVALDYDKAKQAIRRI. The region spanning 624 to 692 is the S1 motif domain; that stretch reads GAVYTGKVSH…RQGRIRLSMK (69 aa).

This sequence belongs to the polyribonucleotide nucleotidyltransferase family. Component of the RNA degradosome, which is a multiprotein complex involved in RNA processing and mRNA degradation. The cofactor is Mg(2+).

It localises to the cytoplasm. The enzyme catalyses RNA(n+1) + phosphate = RNA(n) + a ribonucleoside 5'-diphosphate. Its function is as follows. Involved in mRNA degradation. Catalyzes the phosphorolysis of single-stranded polyribonucleotides processively in the 3'- to 5'-direction. The sequence is that of Polyribonucleotide nucleotidyltransferase from Blochmanniella pennsylvanica (strain BPEN).